Consider the following 434-residue polypeptide: Putative ankyrin repeat protein FPV023 (434 aa).

ANK repeat units follow at residues 33-62, 134-163, 167-197, 201-230, 236-265, 269-299, and 303-330; these read RLKILLHKAIELRNIEAVRLLLNNDVDPVA, LTISRMEPSRQIEEIQIMDILLSKGIDINF, IGNTALHYACDYRNGLNMVRHLIKNGADINI, YGTTPLACAVSTRNIELVSILLDSGADPNS, IGTKVLHTAVGSGNFNIAKELIESGADPNI, AGVTPLHVAAIDEDSYALLELLLDNGADPNI, and NGTTPLFQAMHNYNRVKLLFMYGADINI.

The polypeptide is Putative ankyrin repeat protein FPV023 (Fowlpox virus (strain NVSL) (FPV)).